A 259-amino-acid polypeptide reads, in one-letter code: Large ribosomal subunit protein eL8 (259 aa).

The tract at residues 1–24 (MAPKSKKVAPSPFAQPKAAKTTKN) is disordered. 2 positions are modified to phosphoserine: S11 and S33.

Belongs to the eukaryotic ribosomal protein eL8 family. In terms of assembly, component of the large ribosomal subunit (LSU). Mature yeast ribosomes consist of a small (40S) and a large (60S) subunit. The 40S small subunit contains 1 molecule of ribosomal RNA (18S rRNA) and at least 33 different proteins. The large 60S subunit contains 3 rRNA molecules (25S, 5.8S and 5S rRNA) and at least 46 different proteins.

The protein resides in the cytoplasm. In terms of biological role, component of the ribosome, a large ribonucleoprotein complex responsible for the synthesis of proteins in the cell. The small ribosomal subunit (SSU) binds messenger RNAs (mRNAs) and translates the encoded message by selecting cognate aminoacyl-transfer RNA (tRNA) molecules. The large subunit (LSU) contains the ribosomal catalytic site termed the peptidyl transferase center (PTC), which catalyzes the formation of peptide bonds, thereby polymerizing the amino acids delivered by tRNAs into a polypeptide chain. The nascent polypeptides leave the ribosome through a tunnel in the LSU and interact with protein factors that function in enzymatic processing, targeting, and the membrane insertion of nascent chains at the exit of the ribosomal tunnel. The polypeptide is Large ribosomal subunit protein eL8 (rpl8) (Schizosaccharomyces pombe (strain 972 / ATCC 24843) (Fission yeast)).